The following is a 264-amino-acid chain: Phosphoribosylaminoimidazole-succinocarboxamide synthase 1 (264 aa).

Belongs to the SAICAR synthetase family.

The catalysed reaction is 5-amino-1-(5-phospho-D-ribosyl)imidazole-4-carboxylate + L-aspartate + ATP = (2S)-2-[5-amino-1-(5-phospho-beta-D-ribosyl)imidazole-4-carboxamido]succinate + ADP + phosphate + 2 H(+). It functions in the pathway purine metabolism; IMP biosynthesis via de novo pathway; 5-amino-1-(5-phospho-D-ribosyl)imidazole-4-carboxamide from 5-amino-1-(5-phospho-D-ribosyl)imidazole-4-carboxylate: step 1/2. This is Phosphoribosylaminoimidazole-succinocarboxamide synthase 1 (purC1) from Mesorhizobium japonicum (strain LMG 29417 / CECT 9101 / MAFF 303099) (Mesorhizobium loti (strain MAFF 303099)).